A 419-amino-acid polypeptide reads, in one-letter code: Glucose-1-phosphate adenylyltransferase (419 aa).

Residues Y107, G172, 187–188 (EK), and S205 each bind alpha-D-glucose 1-phosphate.

This sequence belongs to the bacterial/plant glucose-1-phosphate adenylyltransferase family. As to quaternary structure, homotetramer.

It catalyses the reaction alpha-D-glucose 1-phosphate + ATP + H(+) = ADP-alpha-D-glucose + diphosphate. It participates in glycan biosynthesis; glycogen biosynthesis. In terms of biological role, involved in the biosynthesis of ADP-glucose, a building block required for the elongation reactions to produce glycogen. Catalyzes the reaction between ATP and alpha-D-glucose 1-phosphate (G1P) to produce pyrophosphate and ADP-Glc. The polypeptide is Glucose-1-phosphate adenylyltransferase (Novosphingobium aromaticivorans (strain ATCC 700278 / DSM 12444 / CCUG 56034 / CIP 105152 / NBRC 16084 / F199)).